The chain runs to 138 residues: Large ribosomal subunit protein uL16 (138 aa).

Residues 1-13 show a composition bias toward basic residues; that stretch reads MLQPARRKYRKEQ. Residues 1–22 form a disordered region; that stretch reads MLQPARRKYRKEQKGRNTGVAT.

This sequence belongs to the universal ribosomal protein uL16 family. As to quaternary structure, part of the 50S ribosomal subunit.

Its function is as follows. Binds 23S rRNA and is also seen to make contacts with the A and possibly P site tRNAs. This chain is Large ribosomal subunit protein uL16, found in Polaromonas sp. (strain JS666 / ATCC BAA-500).